Consider the following 129-residue polypeptide: Glycine cleavage system H protein (129 aa).

A Lipoyl-binding domain is found at 24 to 106 (TFTVGITEHA…FGDGWLFRIK (83 aa)). An N6-lipoyllysine modification is found at Lys-65.

It belongs to the GcvH family. As to quaternary structure, the glycine cleavage system is composed of four proteins: P, T, L and H. (R)-lipoate serves as cofactor.

In terms of biological role, the glycine cleavage system catalyzes the degradation of glycine. The H protein shuttles the methylamine group of glycine from the P protein to the T protein. In Pseudoalteromonas translucida (strain TAC 125), this protein is Glycine cleavage system H protein.